A 68-amino-acid chain; its full sequence is Cytotoxic linear peptide (68 aa).

Residues methionine 1–alanine 23 form the signal peptide. A Leucine amide modification is found at leucine 36. A propeptide spanning residues glycine 40–serine 68 is cleaved from the precursor.

The protein belongs to the non-disulfide-bridged peptide (NDBP) superfamily. Short antimicrobial peptide (group 4) family. As to expression, expressed by the venom gland.

Its subcellular location is the secreted. The protein resides in the target cell membrane. Its function is as follows. Amphipathic peptide that has antibacterial activities. This Pandinus cavimanus (Tanzanian red clawed scorpion) protein is Cytotoxic linear peptide.